Here is a 247-residue protein sequence, read N- to C-terminus: Probable transcriptional regulatory protein LBF_0056 (247 aa).

This sequence belongs to the TACO1 family.

It is found in the cytoplasm. This chain is Probable transcriptional regulatory protein LBF_0056, found in Leptospira biflexa serovar Patoc (strain Patoc 1 / Ames).